Consider the following 44-residue polypeptide: Phosphatase RapA inhibitor (44 aa).

Positions methionine 1–alanine 39 are excised as a propeptide.

The protein belongs to the Phr family. As to quaternary structure, interacts with RapA and inhibits its interaction with Spo0F. Post-translationally, secreted with a propeptide domain, which is cleaved in the cell wall by the secreted serine proteases subtilisin and Vpr to produce a mature signaling peptide. Contains a predicted signal peptide cleavage site in the N-terminal region, however the propeptide is probably subject to only one processing event, at the N-terminal end of the mature peptide.

Its subcellular location is the secreted. It localises to the cytoplasm. Inhibition of RapA requires a free carboxylate group at the C-terminal end of the PhrA pentapeptide. A free C-terminal carboxylic acid PhrA pentapeptide inhibits RapA phosphatase activity at a 1:1 ratio and is approximately 200 fold more active than a C-terminal amide peptide. In terms of biological role, signaling molecule involved in the regulation of sporulation. Secreted during production, but the mature peptide acts intracellularly, indicating that it needs to be imported into the cell to function. Inhibitor of the RapA phosphatase activity. Does not act on RapB. In Bacillus subtilis (strain 168), this protein is Phosphatase RapA inhibitor.